Reading from the N-terminus, the 585-residue chain is Parathyroid hormone/parathyroid hormone-related peptide receptor (585 aa).

The first 26 residues, 1 to 26, serve as a signal peptide directing secretion; the sequence is MGAARIAPGLALLLCCPVLSSAYALV. At 27 to 184 the chain is on the extracellular side; sequence DADDVMTKEE…REREVFDRLG (158 aa). 3 disulfide bridges follow: cysteine 48–cysteine 113, cysteine 104–cysteine 144, and cysteine 127–cysteine 166. The tract at residues 66 to 100 is disordered; the sequence is DKGWASAPTSGKPRKEKASGKLYPESGEDTGSRHQ. Asparagine 147, asparagine 157, asparagine 162, and asparagine 172 each carry an N-linked (GlcNAc...) asparagine glycan. The helical transmembrane segment at 185 to 208 threads the bilayer; the sequence is MIYTVGYSVSLASLTVAVLILAYF. Topologically, residues 209–215 are cytoplasmic; sequence RRLHCTR. Residues 216–235 traverse the membrane as a helical segment; it reads NYIHMHLFLSFMLRAVSIFV. Residues 236-277 lie on the Extracellular side of the membrane; it reads KDAVLYSGATLDEAERLTEEELRAIAQAPLPPVAATSYVGCR. A helical membrane pass occupies residues 278-301; sequence VAVTFFLYFLATNYYWILVEGLYL. The Cytoplasmic portion of the chain corresponds to 302-315; the sequence is HSLIFMAFFSEKKY. Residues 316–337 traverse the membrane as a helical segment; that stretch reads LWGFTVFGWGLPAIFVAVWVSV. Residues 338–356 are Extracellular-facing; sequence RATLANTGCWDLSSGNKKW. The helical transmembrane segment at 357 to 377 threads the bilayer; that stretch reads IIQVPILASIVLNFILFINIV. Topologically, residues 378 to 404 are cytoplasmic; that stretch reads RVLATKLRETNAGRCDTRQQYRKLLKS. The helical transmembrane segment at 405-423 threads the bilayer; the sequence is TLVLMPLFGVHYIVFMATP. Residues 424–435 lie on the Extracellular side of the membrane; sequence YTEVSGTLWQVQ. A helical membrane pass occupies residues 436 to 458; the sequence is MHYEMLFNSFQGFFVAIIYCFCN. Residues 459–585 lie on the Cytoplasmic side of the membrane; it reads GEVQAEIKKS…LLQEEWETVM (127 aa). The short motif at 469 to 472 is the Important for interaction with G proteins element; sequence WSRW. The residue at position 543 (threonine 543) is a Phosphothreonine.

Belongs to the G-protein coupled receptor 2 family. As to quaternary structure, homodimer in the absence of bound ligand. Peptide hormone binding leads to dissociation of the homodimer. In terms of processing, N-glycosylated.

The protein resides in the cell membrane. Its function is as follows. G-protein-coupled receptor for parathyroid hormone (PTH) and for parathyroid hormone-related peptide (PTHLH). Ligand binding causes a conformation change that triggers signaling via guanine nucleotide-binding proteins (G proteins) and modulates the activity of downstream effectors, such as adenylate cyclase (cAMP). PTH1R is coupled to G(s) G alpha proteins and mediates activation of adenylate cyclase activity. PTHLH dissociates from PTH1R more rapidly than PTH; as consequence, the cAMP response induced by PTHLH decays faster than the response induced by PTH. The polypeptide is Parathyroid hormone/parathyroid hormone-related peptide receptor (PTH1R) (Sus scrofa (Pig)).